The chain runs to 365 residues: tRNA N6-adenosine threonylcarbamoyltransferase (365 aa).

Fe cation is bound by residues histidine 119 and histidine 123. Substrate-binding positions include 141–145 (LVSGG), aspartate 174, glycine 187, and asparagine 289. Aspartate 317 is a binding site for Fe cation. The interval 342–365 (ARPRWPLDSKSPAMLGSGKKGAKA) is disordered.

This sequence belongs to the KAE1 / TsaD family. Fe(2+) is required as a cofactor.

The protein localises to the cytoplasm. The enzyme catalyses L-threonylcarbamoyladenylate + adenosine(37) in tRNA = N(6)-L-threonylcarbamoyladenosine(37) in tRNA + AMP + H(+). Its function is as follows. Required for the formation of a threonylcarbamoyl group on adenosine at position 37 (t(6)A37) in tRNAs that read codons beginning with adenine. Is involved in the transfer of the threonylcarbamoyl moiety of threonylcarbamoyl-AMP (TC-AMP) to the N6 group of A37, together with TsaE and TsaB. TsaD likely plays a direct catalytic role in this reaction. This is tRNA N6-adenosine threonylcarbamoyltransferase from Roseobacter denitrificans (strain ATCC 33942 / OCh 114) (Erythrobacter sp. (strain OCh 114)).